A 364-amino-acid polypeptide reads, in one-letter code: Aminomethyltransferase (364 aa).

It belongs to the GcvT family. In terms of assembly, the glycine cleavage system is composed of four proteins: P, T, L and H.

It catalyses the reaction N(6)-[(R)-S(8)-aminomethyldihydrolipoyl]-L-lysyl-[protein] + (6S)-5,6,7,8-tetrahydrofolate = N(6)-[(R)-dihydrolipoyl]-L-lysyl-[protein] + (6R)-5,10-methylene-5,6,7,8-tetrahydrofolate + NH4(+). In terms of biological role, the glycine cleavage system catalyzes the degradation of glycine. In Salmonella dublin (strain CT_02021853), this protein is Aminomethyltransferase.